Reading from the N-terminus, the 479-residue chain is Glycogen synthase (479 aa).

An ADP-alpha-D-glucose-binding site is contributed by Lys15.

It belongs to the glycosyltransferase 1 family. Bacterial/plant glycogen synthase subfamily.

It carries out the reaction [(1-&gt;4)-alpha-D-glucosyl](n) + ADP-alpha-D-glucose = [(1-&gt;4)-alpha-D-glucosyl](n+1) + ADP + H(+). Its pathway is glycan biosynthesis; glycogen biosynthesis. Functionally, synthesizes alpha-1,4-glucan chains using ADP-glucose. In Pectobacterium carotovorum subsp. carotovorum (strain PC1), this protein is Glycogen synthase.